The sequence spans 442 residues: tRNA-2-methylthio-N(6)-dimethylallyladenosine synthase (442 aa).

The MTTase N-terminal domain occupies 2–120 (KKVFIRTFGC…LPKMIVDKET (119 aa)). The [4Fe-4S] cluster site is built by cysteine 11, cysteine 49, cysteine 83, cysteine 157, cysteine 161, and cysteine 164. The Radical SAM core domain occupies 143 to 375 (RVEGGAAFVS…NEVIEAETAR (233 aa)). The region spanning 378-441 (QTMIGTVQRC…TFSLRGKIVE (64 aa)) is the TRAM domain.

Belongs to the methylthiotransferase family. MiaB subfamily. As to quaternary structure, monomer. Requires [4Fe-4S] cluster as cofactor.

It is found in the cytoplasm. It catalyses the reaction N(6)-dimethylallyladenosine(37) in tRNA + (sulfur carrier)-SH + AH2 + 2 S-adenosyl-L-methionine = 2-methylsulfanyl-N(6)-dimethylallyladenosine(37) in tRNA + (sulfur carrier)-H + 5'-deoxyadenosine + L-methionine + A + S-adenosyl-L-homocysteine + 2 H(+). In terms of biological role, catalyzes the methylthiolation of N6-(dimethylallyl)adenosine (i(6)A), leading to the formation of 2-methylthio-N6-(dimethylallyl)adenosine (ms(2)i(6)A) at position 37 in tRNAs that read codons beginning with uridine. The chain is tRNA-2-methylthio-N(6)-dimethylallyladenosine synthase from Neisseria gonorrhoeae (strain NCCP11945).